We begin with the raw amino-acid sequence, 339 residues long: Isopentenyl-diphosphate delta-isomerase (339 aa).

Residue 7–8 (RK) participates in substrate binding. FMN contacts are provided by residues S65, 66-68 (SMT), S96, and N125. Position 96–98 (96–98 (SQR)) interacts with substrate. Residue Q160 participates in substrate binding. E161 serves as a coordination point for Mg(2+). FMN is bound by residues K192, T222, and 293-294 (AG).

Belongs to the IPP isomerase type 2 family. As to quaternary structure, homooctamer. Dimer of tetramers. FMN serves as cofactor. The cofactor is NADPH. It depends on Mg(2+) as a cofactor.

Its subcellular location is the cytoplasm. It carries out the reaction isopentenyl diphosphate = dimethylallyl diphosphate. Functionally, involved in the biosynthesis of isoprenoids. Catalyzes the 1,3-allylic rearrangement of the homoallylic substrate isopentenyl (IPP) to its allylic isomer, dimethylallyl diphosphate (DMAPP). This is Isopentenyl-diphosphate delta-isomerase from Vibrio parahaemolyticus serotype O3:K6 (strain RIMD 2210633).